A 1078-amino-acid chain; its full sequence is Rho family-interacting cell polarization regulator 2 (1078 aa).

Phosphoserine occurs at positions 46 and 62. The interval 80–138 is involved in cell filopodia formation; the sequence is MHNLGHKNNNTPKEPQPKRVEEVYRALKNGLDEYLEFHQTELDKLTAQLKDMKRNSRLG. Residues 108–137 adopt a coiled-coil conformation; the sequence is NGLDEYLEFHQTELDKLTAQLKDMKRNSRL. At Ser-366 the chain carries Phosphoserine. Positions 488-508 are enriched in polar residues; sequence SSLSSQNEGTEDSSSASSRNS. The segment at 488 to 534 is disordered; the sequence is SSLSSQNEGTEDSSSASSRNSLGEDHEPKSHPKSDTVEPGKPGVATR. Basic and acidic residues predominate over residues 509-525; it reads LGEDHEPKSHPKSDTVE. Ser-582 is modified (phosphoserine).

This sequence belongs to the RIPOR family. As to quaternary structure, homooligomer; homooligomerization is regulated by RHOC and leads to the formation of concatemers through the association of N- and C-termini. Interacts (phosphorylated form) with 14-3-3 proteins; these interactions occur during myogenic cell differentiation and also induces T cell proliferation arrest. Interacts (phosphorylated form) with HDAC6; this interaction occurs during early myogenic differentiation, prevents HDAC6 to deacetylate tubulin and also induces T cell proliferation arrest. Interacts with DYSF; this interaction occurs during early myogenic differentiation. Interacts with MYOF. Interacts (via active GTP- or inactive GDP-bound forms) with RHOA; this interaction is direct, blocks the loading of GTP to RHOA and decreases upon chemokine CCL19 stimulation in primary T lymphocytes. Interacts with RHOC. Interacts (via phosphorylated form) with YWHAB; this interaction occurs in a chemokine-dependent manner and does not compete for binding of RIPOR2 with RHOA nor blocks inhibition of RIPOR2-mediated RHOA activity. Interacts with YWHAE. Interacts with YWHAQ. Phosphorylated. Chemokine-induced phosphorylation in neutrophils occurs in a PKC- and AKT-dependent manner, resulting in RIPOR2 interaction with YWHAB and stabilization. Phosphorylated by PKCA, AKT1 and MAPKAPK1A; in vitro. Expressed in the cochlea. Expressed in inner hair cells and outer hair cells and Hensen's cells (at protein level). Expressed in the brain, cerebellum, spinal cord, retina, heart, spleen liver, kidney, bladder, muscle and lung. Expressed in the cochlea of the inner ear.

Its subcellular location is the cytoplasm. It localises to the cytoskeleton. The protein localises to the cell projection. The protein resides in the filopodium. It is found in the stereocilium. Its subcellular location is the stereocilium membrane. It localises to the apical cell membrane. In terms of biological role, acts as an inhibitor of the small GTPase RHOA and plays several roles in the regulation of myoblast and hair cell differentiation, lymphocyte T proliferation and neutrophil polarization. Plays a role in fetal mononuclear myoblast differentiation by promoting filopodia and myotube formation. Maintains naive T lymphocytes in a quiescent state and prevents chemokine-induced T lymphocyte responses, such as cell adhesion, polarization and migration. Involved also in the regulation of neutrophil polarization, chemotaxis and adhesion. Required for normal development of inner and outer hair cell stereocilia within the cochlea of the inner ear. Plays a role for maintaining the structural organization of the basal domain of stereocilia. Involved in mechanosensory hair cell function. Required for normal hearing. This Mus musculus (Mouse) protein is Rho family-interacting cell polarization regulator 2.